The sequence spans 686 residues: Ovotransferrin (686 aa).

Transferrin-like domains follow at residues 7-333 (VRWC…SLRK) and 345-670 (IQWC…SLNT). Disulfide bonds link Cys-10/Cys-45, Cys-20/Cys-36, Cys-115/Cys-197, Cys-160/Cys-174, Cys-171/Cys-182, and Cys-228/Cys-242. Residues 333–341 (KDQLTVGPR) are connecting region. Intrachain disulfides connect Cys-348–Cys-380, Cys-358–Cys-371, Cys-405–Cys-680, Cys-421–Cys-643, Cys-454–Cys-530, Cys-478–Cys-671, Cys-488–Cys-502, Cys-499–Cys-513, and Cys-570–Cys-584. An N-linked (GlcNAc...) asparagine glycan is attached at Asn-473. Residue Asn-548 is glycosylated (N-linked (GlcNAc...) asparagine).

This sequence belongs to the transferrin family. As to quaternary structure, monomer.

The protein localises to the secreted. In terms of biological role, transferrins are iron binding transport proteins which can bind two Fe(3+) ions in association with the binding of an anion, usually bicarbonate. It is responsible for the transport of iron from sites of absorption and heme degradation to those of storage and utilization. Serum transferrin may also have a further role in stimulating cell proliferation. Functionally, ovotransferrin has a bacteriostatic function. Its concentration in avian egg is the highest concentration of any transferrin in vivo. This Anas platyrhynchos (Mallard) protein is Ovotransferrin.